An 88-amino-acid polypeptide reads, in one-letter code: MANIKSNEKRLRQDIKRNLNNKGQKTKLKTNVKKFNKEINLDNLSSVYSQADRLARKGIISLNRAKRLKSKNAVILHKSNTNSTAKKQ.

Residues 1 to 17 (MANIKSNEKRLRQDIKR) are compositionally biased toward basic and acidic residues. The segment at 1–25 (MANIKSNEKRLRQDIKRNLNNKGQK) is disordered.

It belongs to the bacterial ribosomal protein bS20 family.

Functionally, binds directly to 16S ribosomal RNA. This Mycoplasma genitalium (strain ATCC 33530 / DSM 19775 / NCTC 10195 / G37) (Mycoplasmoides genitalium) protein is Small ribosomal subunit protein bS20.